The sequence spans 229 residues: Potassium/proton antiporter CemA (229 aa).

Transmembrane regions (helical) follow at residues 6–26 (AFIP…ISLC), 107–127 (ILHF…SFWG), and 189–209 (ILSG…KYWI).

Belongs to the CemA family.

It localises to the plastid. It is found in the chloroplast inner membrane. The catalysed reaction is K(+)(in) + H(+)(out) = K(+)(out) + H(+)(in). Contributes to K(+)/H(+) antiport activity by supporting proton efflux to control proton extrusion and homeostasis in chloroplasts in a light-dependent manner to modulate photosynthesis. Prevents excessive induction of non-photochemical quenching (NPQ) under continuous-light conditions. Indirectly promotes efficient inorganic carbon uptake into chloroplasts. The sequence is that of Potassium/proton antiporter CemA from Draba nemorosa (Woodland whitlowgrass).